The following is a 143-amino-acid chain: Small ribosomal subunit protein eS19y (143 aa).

Belongs to the eukaryotic ribosomal protein eS19 family.

The polypeptide is Small ribosomal subunit protein eS19y (RPS19B) (Arabidopsis thaliana (Mouse-ear cress)).